Here is a 430-residue protein sequence, read N- to C-terminus: Enolase (430 aa).

Position 163 (glutamine 163) interacts with (2R)-2-phosphoglycerate. The active-site Proton donor is glutamate 205. Positions 242, 288, and 315 each coordinate Mg(2+). (2R)-2-phosphoglycerate contacts are provided by lysine 340, arginine 369, serine 370, and lysine 391. Lysine 340 serves as the catalytic Proton acceptor.

This sequence belongs to the enolase family. The cofactor is Mg(2+).

The protein localises to the cytoplasm. The protein resides in the secreted. It is found in the cell surface. It catalyses the reaction (2R)-2-phosphoglycerate = phosphoenolpyruvate + H2O. Its pathway is carbohydrate degradation; glycolysis; pyruvate from D-glyceraldehyde 3-phosphate: step 4/5. In terms of biological role, catalyzes the reversible conversion of 2-phosphoglycerate (2-PG) into phosphoenolpyruvate (PEP). It is essential for the degradation of carbohydrates via glycolysis. In Acidobacterium capsulatum (strain ATCC 51196 / DSM 11244 / BCRC 80197 / JCM 7670 / NBRC 15755 / NCIMB 13165 / 161), this protein is Enolase.